We begin with the raw amino-acid sequence, 486 residues long: Catalase (486 aa).

Residues 1–28 (MENKKLTAANGRPIADNQNSQTAGPRGP) are disordered. Active-site residues include His54 and Asn127. A heme-binding site is contributed by Tyr337.

It belongs to the catalase family. Homodimer. It depends on heme as a cofactor.

The enzyme catalyses 2 H2O2 = O2 + 2 H2O. In terms of biological role, decomposes hydrogen peroxide into water and oxygen; serves to protect cells from the toxic effects of hydrogen peroxide. May be involved in aerotolerance of B.fragilis. This chain is Catalase (katA), found in Bacteroides fragilis (strain YCH46).